The following is a 114-amino-acid chain: U17-barytoxin-Tl1a (114 aa).

Positions 1 to 20 (MKTIIVFLSLLVLATKFGDA) are cleaved as a signal peptide. A propeptide spanning residues 21 to 74 (NEGVNQEQMKEVIQNEFREDFLNEMAPMSLLQQLEAIESTLLEKEADRNSRQKR) is cleaved from the precursor. Cystine bridges form between Cys-75–Cys-88, Cys-82–Cys-93, and Cys-87–Cys-108.

This sequence belongs to the neurotoxin 14 (magi-1) family. 03 (ICK-30-40) subfamily. In terms of tissue distribution, expressed by the venom gland.

The protein localises to the secreted. Ion channel inhibitor. In Trittame loki (Brush-footed trapdoor spider), this protein is U17-barytoxin-Tl1a.